Consider the following 530-residue polypeptide: Arginine--tRNA ligase (530 aa).

A 'HIGH' region motif is present at residues 113 to 123 (ANPTGPLHIGH).

It belongs to the class-I aminoacyl-tRNA synthetase family. As to quaternary structure, monomer.

It is found in the cytoplasm. The enzyme catalyses tRNA(Arg) + L-arginine + ATP = L-arginyl-tRNA(Arg) + AMP + diphosphate. This chain is Arginine--tRNA ligase, found in Campylobacter jejuni subsp. jejuni serotype O:2 (strain ATCC 700819 / NCTC 11168).